The sequence spans 416 residues: Gamma-glutamyl phosphate reductase (416 aa).

This sequence belongs to the gamma-glutamyl phosphate reductase family.

The protein localises to the cytoplasm. The catalysed reaction is L-glutamate 5-semialdehyde + phosphate + NADP(+) = L-glutamyl 5-phosphate + NADPH + H(+). It functions in the pathway amino-acid biosynthesis; L-proline biosynthesis; L-glutamate 5-semialdehyde from L-glutamate: step 2/2. Its function is as follows. Catalyzes the NADPH-dependent reduction of L-glutamate 5-phosphate into L-glutamate 5-semialdehyde and phosphate. The product spontaneously undergoes cyclization to form 1-pyrroline-5-carboxylate. This is Gamma-glutamyl phosphate reductase from Salmonella paratyphi C (strain RKS4594).